Reading from the N-terminus, the 360-residue chain is 3-isopropylmalate dehydrogenase (360 aa).

76 to 89 (GPKWDTIERDIRPE) provides a ligand contact to NAD(+). Substrate-binding residues include Arg-96, Arg-106, Arg-134, and Asp-224. Positions 224, 248, and 252 each coordinate Mg(2+). Position 282 to 294 (282 to 294 (GSAPDIAGQGIAN)) interacts with NAD(+).

This sequence belongs to the isocitrate and isopropylmalate dehydrogenases family. LeuB type 1 subfamily. Homodimer. The cofactor is Mg(2+). Mn(2+) is required as a cofactor.

It localises to the cytoplasm. The enzyme catalyses (2R,3S)-3-isopropylmalate + NAD(+) = 4-methyl-2-oxopentanoate + CO2 + NADH. It participates in amino-acid biosynthesis; L-leucine biosynthesis; L-leucine from 3-methyl-2-oxobutanoate: step 3/4. In terms of biological role, catalyzes the oxidation of 3-carboxy-2-hydroxy-4-methylpentanoate (3-isopropylmalate) to 3-carboxy-4-methyl-2-oxopentanoate. The product decarboxylates to 4-methyl-2 oxopentanoate. The sequence is that of 3-isopropylmalate dehydrogenase from Pseudomonas syringae pv. tomato (strain ATCC BAA-871 / DC3000).